The primary structure comprises 73 residues: Capsid protein G8P (73 aa).

A signal peptide spans 1–23 (MKKSLVLKASVAVATLVPMLSFA). Residues 24–44 (AEGDDPAKAAFDSLQASATEY) lie on the Periplasmic side of the membrane. A helical transmembrane segment spans residues 45–65 (IGYAWAMVVVIVGATIGIKLF). Residues 66 to 73 (KKFTSKAS) lie on the Cytoplasmic side of the membrane.

Belongs to the inovirus capsid protein family. Homomultimerizes. There are several thousands of this protein in the phage capsid.

The protein resides in the virion. Its subcellular location is the host membrane. Self assembles to form a helical capsid wrapping up the viral genomic DNA. The capsid displays a filamentous structure with a length of 760-1950 nm and a width of 6-8 nm. The virion assembly and budding take place at the host inner membrane. This is Capsid protein G8P (VIII) from Escherichia coli (Bacteriophage f1).